Consider the following 328-residue polypeptide: uncharacterized protein (328 aa).

2 coiled-coil regions span residues 67-190 (FKEQ…VLEE) and 223-251 (MAQR…DNMM).

This is an uncharacterized protein from Mus musculus (Mouse).